The following is a 274-amino-acid chain: 2,3,4,5-tetrahydropyridine-2,6-dicarboxylate N-succinyltransferase (274 aa).

Residues Arg-105 and Asp-142 each contribute to the substrate site.

This sequence belongs to the transferase hexapeptide repeat family. As to quaternary structure, homotrimer.

The protein localises to the cytoplasm. It catalyses the reaction (S)-2,3,4,5-tetrahydrodipicolinate + succinyl-CoA + H2O = (S)-2-succinylamino-6-oxoheptanedioate + CoA. The protein operates within amino-acid biosynthesis; L-lysine biosynthesis via DAP pathway; LL-2,6-diaminopimelate from (S)-tetrahydrodipicolinate (succinylase route): step 1/3. The protein is 2,3,4,5-tetrahydropyridine-2,6-dicarboxylate N-succinyltransferase of Methylobacillus flagellatus (strain ATCC 51484 / DSM 6875 / VKM B-1610 / KT).